Consider the following 352-residue polypeptide: DNA polymerase IV (352 aa).

The UmuC domain occupies 4–185 (IIHVDMDCFY…LPLEKIPGVG (182 aa)). Positions 8 and 103 each coordinate Mg(2+). The active site involves glutamate 104.

This sequence belongs to the DNA polymerase type-Y family. As to quaternary structure, monomer. The cofactor is Mg(2+).

Its subcellular location is the cytoplasm. It catalyses the reaction DNA(n) + a 2'-deoxyribonucleoside 5'-triphosphate = DNA(n+1) + diphosphate. Poorly processive, error-prone DNA polymerase involved in untargeted mutagenesis. Copies undamaged DNA at stalled replication forks, which arise in vivo from mismatched or misaligned primer ends. These misaligned primers can be extended by PolIV. Exhibits no 3'-5' exonuclease (proofreading) activity. May be involved in translesional synthesis, in conjunction with the beta clamp from PolIII. This is DNA polymerase IV from Pectobacterium atrosepticum (strain SCRI 1043 / ATCC BAA-672) (Erwinia carotovora subsp. atroseptica).